A 326-amino-acid polypeptide reads, in one-letter code: MYGIEYTTILTILISIILLNYILKTITNTMDYIIFRFLLLIALISPFVRTQNYGMYLPITGSLDAVYTNSTSGEPFLTSTLCLYYPAEAKNEISDDEWENTLSQLFLTKGWPIGSVYFKDYNDINTFSVNPQLYCDYNVVLMRYDNTSELDASELADLILNEWLCNPMDISLYYYQQSSESNKWISMGTDCTVKVCPLNTQTLGIGCKTTDVNTFEIVASSEKLVITDVVNGVNHKINISINTCTIRNCNKLGPRENVAIIQVGGPNALDITADPTTVPQVQRIMRINWKKWWQVFYTVVDYINQVIQVMSKRSRSLDAAAFYYRI.

The first 50 residues, 1-50 (MYGIEYTTILTILISIILLNYILKTITNTMDYIIFRFLLLIALISPFVRT), serve as a signal peptide directing secretion. Asparagine 69 carries N-linked (GlcNAc...) asparagine; by host glycosylation. Cysteines 82 and 135 form a disulfide. Aspartate 95 is a Ca(2+) binding site. Residue asparagine 146 is glycosylated (N-linked (GlcNAc...) asparagine; by host). A CNP motif; interaction with ITGAV/ITGB3 region spans residues 165–167 (CNP). 3 disulfides stabilise this stretch: cysteine 165-cysteine 249, cysteine 191-cysteine 244, and cysteine 196-cysteine 207. Residues glutamine 177, glycine 206, threonine 214, glutamate 216, aspartate 228, and valine 229 each contribute to the Ca(2+) site. A glycan (N-linked (GlcNAc...) asparagine; by host) is linked at asparagine 238. Residues 253-255 (GPR) form a GPR motif; interaction with ITGAX/ITGB2 region. A Ca(2+)-binding site is contributed by aspartate 301.

It belongs to the rotavirus VP7 family. Homotrimer; disulfide-linked. 2 Ca(2+) ions bound at each subunit interface in the trimer hold the trimer together. Interacts with the intermediate capsid protein VP6. Interacts with the outer capsid protein VP5*. Intramolecular disulfide bonds. Post-translationally, N-glycosylated. In terms of processing, the N-terminus is blocked possibly by pyroglutamic acid.

Its subcellular location is the virion. It localises to the host endoplasmic reticulum lumen. Functionally, calcium-binding protein that interacts with rotavirus cell receptors once the initial attachment by VP4 has been achieved. Rotavirus attachment and entry into the host cell probably involves multiple sequential contacts between the outer capsid proteins VP4 and VP7, and the cell receptors. Following entry into the host cell, low intracellular or intravesicular Ca(2+) concentration probably causes the calcium-stabilized VP7 trimers to dissociate from the virion. This step is probably necessary for the membrane-disrupting entry step and the release of VP4, which is locked onto the virion by VP7. This chain is Outer capsid glycoprotein VP7, found in Homo sapiens (Human).